The following is a 410-amino-acid chain: Probable protein S-acyltransferase 6 (410 aa).

2 consecutive transmembrane segments (helical) span residues leucine 45 to serine 65 and glycine 76 to leucine 96. The tract at residues asparagine 108–proline 129 is disordered. In terms of domain architecture, DHHC spans lysine 147–phenylalanine 197. Cysteine 177 acts as the S-palmitoyl cysteine intermediate in catalysis. A run of 2 helical transmembrane segments spans residues phenylalanine 191 to cysteine 211 and serine 235 to phenylalanine 255. At serine 325 the chain carries Phosphoserine.

It belongs to the DHHC palmitoyltransferase family.

The protein resides in the cell membrane. It catalyses the reaction L-cysteinyl-[protein] + hexadecanoyl-CoA = S-hexadecanoyl-L-cysteinyl-[protein] + CoA. Its function is as follows. Palmitoyl acyltransferase. The sequence is that of Probable protein S-acyltransferase 6 (PAT06) from Arabidopsis thaliana (Mouse-ear cress).